The following is a 326-amino-acid chain: Small ribosomal subunit biogenesis GTPase RsgA (326 aa).

The CP-type G domain maps to 80-241 (LSHQMHIIAS…IIDTPGIKGF (162 aa)). Residues 129-132 (NKID) and 183-191 (GHSGVGKST) each bind GTP. Residues Cys265, Cys270, His272, and Cys278 each coordinate Zn(2+).

Belongs to the TRAFAC class YlqF/YawG GTPase family. RsgA subfamily. Monomer. Associates with 30S ribosomal subunit, binds 16S rRNA. Requires Zn(2+) as cofactor.

It localises to the cytoplasm. In terms of biological role, one of several proteins that assist in the late maturation steps of the functional core of the 30S ribosomal subunit. Helps release RbfA from mature subunits. May play a role in the assembly of ribosomal proteins into the subunit. Circularly permuted GTPase that catalyzes slow GTP hydrolysis, GTPase activity is stimulated by the 30S ribosomal subunit. The sequence is that of Small ribosomal subunit biogenesis GTPase RsgA from Flavobacterium psychrophilum (strain ATCC 49511 / DSM 21280 / CIP 103535 / JIP02/86).